The primary structure comprises 301 residues: MTEKHRTPDGLVIVDKPSGFTSHDVVAKMRGIARTRRVGHAGTLDPMATGVLVLGVEKATKLLGHLALTEKEYLGTIRLGQNTLTDDAEGEIISSTDASRVTRDAIDAGVAKLSGAIMQVPSKVSAIKIDGVRSYKRAREGEDFEIPARPVTVSSFAVYDVRDAVAEDGTPVLDLVVSVVCSSGTYIRALARDLGADLGVGGHLTALRRTRVGPYKLDAARTLDQLQEELTVMPIAEAAAAAFPRWDVDTKRARLLLNGVRLEMPEEYAGRGAVAVVDPAGRFLALVEEQKGKAKSLAVFG.

Aspartate 45 (nucleophile) is an active-site residue.

Belongs to the pseudouridine synthase TruB family. Type 1 subfamily.

The catalysed reaction is uridine(55) in tRNA = pseudouridine(55) in tRNA. Functionally, responsible for synthesis of pseudouridine from uracil-55 in the psi GC loop of transfer RNAs. The polypeptide is tRNA pseudouridine synthase B (Streptomyces avermitilis (strain ATCC 31267 / DSM 46492 / JCM 5070 / NBRC 14893 / NCIMB 12804 / NRRL 8165 / MA-4680)).